We begin with the raw amino-acid sequence, 282 residues long: tRNA N(3)-cytidine methyltransferase METTL6 (282 aa).

S-adenosyl-L-methionine-binding residues include Trp45, Tyr49, Gly87, Asp110, Asp136, Leu137, and Ile157.

This sequence belongs to the methyltransferase superfamily. METL family. Monomer. Interacts with SARS1/SerRS; interaction is mediated via tRNA(Ser) and is required for N(3)-methylcytidine methylation.

The protein resides in the cytoplasm. Its subcellular location is the nucleus. The catalysed reaction is cytidine(32) in tRNA(Ser) + S-adenosyl-L-methionine = N(3)-methylcytidine(32) in tRNA(Ser) + S-adenosyl-L-homocysteine + H(+). Functionally, S-adenosyl-L-methionine-dependent methyltransferase that mediates N(3)-methylcytidine modification of residue 32 of the tRNA anticodon loop of tRNA(Ser), including tRNA(Ser)(UGA) and tRNA(Ser)(GCU). Interaction with SARS1/SerRS is required for N(3)-methylcytidine methylation. The polypeptide is tRNA N(3)-cytidine methyltransferase METTL6 (METTL6) (Pongo abelii (Sumatran orangutan)).